Here is a 146-residue protein sequence, read N- to C-terminus: Nuclear export protein (146 aa).

In terms of assembly, interacts with host HSC70.

It is found in the host cytoplasm. Its function is as follows. May mediate the nuclear export of encapsidated genomic RNAs (ribonucleoproteins, RNPs). Interaction of viral NEP with M1-Hsc70 is thought to promote nuclear export of the viral encapsidated genomes. This is Nuclear export protein from Infectious salmon anemia virus (isolate Atlantic salmon/Norway/810/9/99) (ISAV).